Reading from the N-terminus, the 508-residue chain is Photosystem II CP47 reaction center protein (508 aa).

6 consecutive transmembrane segments (helical) span residues 21–36 (AVHIMHTALVSGWAGS), 101–115 (IVFSGLCFLAAIWHW), 140–156 (GIHLFLAGVACFGFGAF), 203–218 (IAAGTLGILAGLFHLS), 237–252 (VLSSSIAAVFFAAFVV), and 457–472 (TFALLFFFGHIWHGAR).

It belongs to the PsbB/PsbC family. PsbB subfamily. PSII is composed of 1 copy each of membrane proteins PsbA, PsbB, PsbC, PsbD, PsbE, PsbF, PsbH, PsbI, PsbJ, PsbK, PsbL, PsbM, PsbT, PsbX, PsbY, PsbZ, Psb30/Ycf12, at least 3 peripheral proteins of the oxygen-evolving complex and a large number of cofactors. It forms dimeric complexes. Binds multiple chlorophylls. PSII binds additional chlorophylls, carotenoids and specific lipids. serves as cofactor.

The protein localises to the plastid. It localises to the chloroplast thylakoid membrane. Functionally, one of the components of the core complex of photosystem II (PSII). It binds chlorophyll and helps catalyze the primary light-induced photochemical processes of PSII. PSII is a light-driven water:plastoquinone oxidoreductase, using light energy to abstract electrons from H(2)O, generating O(2) and a proton gradient subsequently used for ATP formation. In Secale cereale (Rye), this protein is Photosystem II CP47 reaction center protein.